Reading from the N-terminus, the 408-residue chain is Glutamate N-acetyltransferase (408 aa).

The substrate site is built by T150, K176, T189, E271, N403, and T408. The active-site Nucleophile is T189.

The protein belongs to the ArgJ family. As to quaternary structure, heterotetramer of two alpha and two beta chains.

It is found in the cytoplasm. The catalysed reaction is N(2)-acetyl-L-ornithine + L-glutamate = N-acetyl-L-glutamate + L-ornithine. It participates in amino-acid biosynthesis; L-arginine biosynthesis; L-ornithine and N-acetyl-L-glutamate from L-glutamate and N(2)-acetyl-L-ornithine (cyclic): step 1/1. Catalyzes the transfer of the acetyl group from N(2)-acetylornithine to glutamate, forming N-acetylglutamate and L-ornithine. This chain is Glutamate N-acetyltransferase, found in Methanococcus maripaludis (strain C7 / ATCC BAA-1331).